A 56-amino-acid chain; its full sequence is Ovomucoid (56 aa).

Positions 6 to 56 (VDCSEYPKPACTLEHRPLCGSDNKTYGNKCNFCNAVVESNGTLTLSHFGKC) constitute a Kazal-like domain. 3 disulfides stabilise this stretch: C8/C38, C16/C35, and C24/C56. Residue N45 is glycosylated (N-linked (GlcNAc...) asparagine).

Its subcellular location is the secreted. The sequence is that of Ovomucoid from Pavo cristatus (Indian peafowl).